Consider the following 307-residue polypeptide: Ribonuclease Z (307 aa).

Zn(2+) contacts are provided by His-63, His-65, Asp-67, His-68, His-141, Asp-212, and His-270. Catalysis depends on Asp-67, which acts as the Proton acceptor.

It belongs to the RNase Z family. As to quaternary structure, homodimer. It depends on Zn(2+) as a cofactor.

It carries out the reaction Endonucleolytic cleavage of RNA, removing extra 3' nucleotides from tRNA precursor, generating 3' termini of tRNAs. A 3'-hydroxy group is left at the tRNA terminus and a 5'-phosphoryl group is left at the trailer molecule.. In terms of biological role, zinc phosphodiesterase, which displays some tRNA 3'-processing endonuclease activity. Probably involved in tRNA maturation, by removing a 3'-trailer from precursor tRNA. In Bacillus anthracis (strain A0248), this protein is Ribonuclease Z.